Consider the following 96-residue polypeptide: MKPHLLQNEELKELIAKIPGWEIISNHLEREFNFGDFIEAFSFMTKIALICEKYNHHPNWENVYSKVIIKLSTHDLGGITNLDQKIASEINEIFEK.

This sequence belongs to the pterin-4-alpha-carbinolamine dehydratase family.

The enzyme catalyses (4aS,6R)-4a-hydroxy-L-erythro-5,6,7,8-tetrahydrobiopterin = (6R)-L-erythro-6,7-dihydrobiopterin + H2O. The sequence is that of Putative pterin-4-alpha-carbinolamine dehydratase from Prochlorococcus marinus (strain MIT 9515).